Consider the following 157-residue polypeptide: Cell number regulator 10 (157 aa).

A run of 2 helical transmembrane segments spans residues 41–57 (DCGL…ITFG) and 66–83 (GATS…LAYF).

Belongs to the cornifelin family. Expressed in roots, leaves, stalks, immature ears and silks.

The protein localises to the membrane. This chain is Cell number regulator 10 (CNR10), found in Zea mays (Maize).